Here is an 80-residue protein sequence, read N- to C-terminus: Exodeoxyribonuclease 7 small subunit (80 aa).

It belongs to the XseB family. As to quaternary structure, heterooligomer composed of large and small subunits.

Its subcellular location is the cytoplasm. The enzyme catalyses Exonucleolytic cleavage in either 5'- to 3'- or 3'- to 5'-direction to yield nucleoside 5'-phosphates.. Its function is as follows. Bidirectionally degrades single-stranded DNA into large acid-insoluble oligonucleotides, which are then degraded further into small acid-soluble oligonucleotides. The chain is Exodeoxyribonuclease 7 small subunit from Rickettsia akari (strain Hartford).